The following is a 336-amino-acid chain: Foldase protein PrsA (336 aa).

A signal peptide spans Met1–Ala22. Cys23 carries N-palmitoyl cysteine lipidation. A lipid anchor (S-diacylglycerol cysteine) is attached at Cys23. One can recognise a PpiC domain in the interval Pro194–Ser286.

Belongs to the PrsA family.

It localises to the cell membrane. It catalyses the reaction [protein]-peptidylproline (omega=180) = [protein]-peptidylproline (omega=0). Its function is as follows. Plays a major role in protein secretion by helping the post-translocational extracellular folding of several secreted proteins. The sequence is that of Foldase protein PrsA from Clostridium botulinum (strain 657 / Type Ba4).